The following is a 180-amino-acid chain: uncharacterized protein (180 aa).

One can recognise an N-acetyltransferase domain in the interval 45–180; that stretch reads FVFSQVRTLD…GNRCAFWYAN (136 aa).

Belongs to the acetyltransferase family. Ycf52 subfamily.

This is an uncharacterized protein from Prochlorococcus marinus (strain SARG / CCMP1375 / SS120).